Consider the following 193-residue polypeptide: Segregation and condensation protein B (193 aa).

This sequence belongs to the ScpB family. As to quaternary structure, homodimer. Homodimerization may be required to stabilize the binding of ScpA to the Smc head domains. Component of a cohesin-like complex composed of ScpA, ScpB and the Smc homodimer, in which ScpA and ScpB bind to the head domain of Smc. The presence of the three proteins is required for the association of the complex with DNA.

It is found in the cytoplasm. Participates in chromosomal partition during cell division. May act via the formation of a condensin-like complex containing Smc and ScpA that pull DNA away from mid-cell into both cell halves. In Streptococcus thermophilus (strain ATCC BAA-250 / LMG 18311), this protein is Segregation and condensation protein B.